A 400-amino-acid polypeptide reads, in one-letter code: MAPLSQLSGHLNYTCGVENSTGASQARPHAYYALSYCALILAIVFGNGLVCMAVLKERALQTTTNYLVVSLAVADLLVATLVMPWVVYLEVTGGVWNFSRVCCDVFVTLDVMMCTASILNLCAISIDRYTAVVMPVHYQHGTGQSSCRRVTLMITAVWVLAFAVSCPLLFGFNTTGDPTVCSISNPDFVIYSSVVSFYLPFGVTVLVYARIYVVLKQRRRKRILTRQNSQCNSVRPGFPQQTLSPDRAHLELKRYYSICQDTALGGPGFQERGGELKREERTRNSLSPTIAPKLSLEVRKLSNGRLSTSLKLGPLQPRGVPLREKKATQMVAIVLGAFIVCWLPFFLTHVLNTHCQTCHVSPELYSATTWLGYVNSALNPVIYTTFNIEFRKAFLKILSC.

The Extracellular portion of the chain corresponds to 1–32 (MAPLSQLSGHLNYTCGVENSTGASQARPHAYY). 2 N-linked (GlcNAc...) asparagine glycosylation sites follow: N12 and N19. The chain crosses the membrane as a helical span at residues 33 to 55 (ALSYCALILAIVFGNGLVCMAVL). The Cytoplasmic portion of the chain corresponds to 56–65 (KERALQTTTN). Residues 66–88 (YLVVSLAVADLLVATLVMPWVVY) traverse the membrane as a helical segment. The Extracellular segment spans residues 89–104 (LEVTGGVWNFSRVCCD). The N-linked (GlcNAc...) asparagine glycan is linked to N97. A disulfide bridge connects residues C103 and C181. The chain crosses the membrane as a helical span at residues 105–126 (VFVTLDVMMCTASILNLCAISI). Topologically, residues 127–149 (DRYTAVVMPVHYQHGTGQSSCRR) are cytoplasmic. The helical transmembrane segment at 150-170 (VTLMITAVWVLAFAVSCPLLF) threads the bilayer. The Extracellular portion of the chain corresponds to 171–187 (GFNTTGDPTVCSISNPD). N-linked (GlcNAc...) asparagine glycosylation occurs at N173. Residues 188–209 (FVIYSSVVSFYLPFGVTVLVYA) form a helical membrane-spanning segment. Over 210-329 (RIYVVLKQRR…VPLREKKATQ (120 aa)) the chain is Cytoplasmic. Residues 330 to 351 (MVAIVLGAFIVCWLPFFLTHVL) form a helical membrane-spanning segment. Residues 352–366 (NTHCQTCHVSPELYS) lie on the Extracellular side of the membrane. Cysteines 355 and 358 form a disulfide. A helical membrane pass occupies residues 367-386 (ATTWLGYVNSALNPVIYTTF). Topologically, residues 387 to 400 (NIEFRKAFLKILSC) are cytoplasmic.

This sequence belongs to the G-protein coupled receptor 1 family. Interacts with CLIC6. Interacts with GRK4. Interacts with PALM. Interacts with FLNA (via filamin repeat 21); increases PKA-mediated phosphorylation of FLNA. Phosphorylated by GRK4. Post-translationally, palmitoylated.

It localises to the cell membrane. In terms of biological role, dopamine receptor whose activity is mediated by G proteins which inhibit adenylyl cyclase. Promotes cell proliferation. The protein is D(3) dopamine receptor (DRD3) of Chlorocebus aethiops (Green monkey).